Reading from the N-terminus, the 497-residue chain is UDP-N-acetylmuramoyl-L-alanyl-D-glutamate--2,6-diaminopimelate ligase (497 aa).

Serine 32 contacts UDP-N-acetyl-alpha-D-muramoyl-L-alanyl-D-glutamate. 113–119 (GTNGKTT) contacts ATP. Residues 155-156 (TT), serine 182, glutamine 188, and arginine 190 each bind UDP-N-acetyl-alpha-D-muramoyl-L-alanyl-D-glutamate. Lysine 222 carries the post-translational modification N6-carboxylysine. Meso-2,6-diaminopimelate is bound by residues arginine 385, 409 to 412 (DNPR), glycine 460, and glutamate 464. The Meso-diaminopimelate recognition motif signature appears at 409-412 (DNPR).

The protein belongs to the MurCDEF family. MurE subfamily. Requires Mg(2+) as cofactor. Carboxylation is probably crucial for Mg(2+) binding and, consequently, for the gamma-phosphate positioning of ATP.

It localises to the cytoplasm. It carries out the reaction UDP-N-acetyl-alpha-D-muramoyl-L-alanyl-D-glutamate + meso-2,6-diaminopimelate + ATP = UDP-N-acetyl-alpha-D-muramoyl-L-alanyl-gamma-D-glutamyl-meso-2,6-diaminopimelate + ADP + phosphate + H(+). The protein operates within cell wall biogenesis; peptidoglycan biosynthesis. Functionally, catalyzes the addition of meso-diaminopimelic acid to the nucleotide precursor UDP-N-acetylmuramoyl-L-alanyl-D-glutamate (UMAG) in the biosynthesis of bacterial cell-wall peptidoglycan. This chain is UDP-N-acetylmuramoyl-L-alanyl-D-glutamate--2,6-diaminopimelate ligase, found in Thermosynechococcus vestitus (strain NIES-2133 / IAM M-273 / BP-1).